The following is a 96-amino-acid chain: Small ribosomal subunit protein bS6 (96 aa).

The protein belongs to the bacterial ribosomal protein bS6 family.

In terms of biological role, binds together with bS18 to 16S ribosomal RNA. The protein is Small ribosomal subunit protein bS6 of Streptococcus gordonii (strain Challis / ATCC 35105 / BCRC 15272 / CH1 / DL1 / V288).